The sequence spans 385 residues: L-arabinitol 4-dehydrogenase (385 aa).

Positions 54, 79, 80, 109, 112, 115, 123, and 164 each coordinate Zn(2+). NAD(+) is bound by residues 191 to 192 (PI), Asp-212, Arg-217, Ile-292, and 316 to 318 (QYR).

This sequence belongs to the zinc-containing alcohol dehydrogenase family. Homotetramer. Requires Zn(2+) as cofactor.

It carries out the reaction L-arabinitol + NAD(+) = L-xylulose + NADH + H(+). It functions in the pathway carbohydrate degradation; L-arabinose degradation via L-arabinitol; D-xylulose 5-phosphate from L-arabinose (fungal route): step 2/5. Catalyzes the NAD-dependent oxidation of L-arabinitol to L-xylulose in the fungal L-arabinose catabolic pathway. L-arabinose catabolism is important for using plant material as a carbon source. NADP cannot act as a cosubstrate. This Penicillium rubens (strain ATCC 28089 / DSM 1075 / NRRL 1951 / Wisconsin 54-1255) (Penicillium chrysogenum) protein is L-arabinitol 4-dehydrogenase (lad1).